A 534-amino-acid chain; its full sequence is Kelch repeat and BTB domain-containing protein 4 (534 aa).

The interval 1-25 (MKGGNADSWQREKLASMESPEEPGA) is disordered. The BTB domain occupies 61–128 (ADVTISVEGR…IYHGTVKLRA (68 aa)). The region spanning 163–255 (CLQVMWLADR…SLKEIGENVH (93 aa)) is the BACK domain. Kelch repeat units follow at residues 255–301 (HIYL…KHGG), 302–344 (DLYV…SVPG), 347–394 (AIYS…NLNG), 396–446 (IYLL…VHKD), and 448–497 (VFIV…VFRD).

In terms of assembly, component of the BCR(KBTBD4) E3 ubiquitin ligase complex, at least composed of CUL3, KBTBD4 and RBX1.

Functionally, substrate-specific adapter of a BCR (BTB-CUL3-RBX1) E3 ubiquitin ligase complex which targets CoREST corepressor complex components RCOR1, KDM1A/LSD1 and HDAC2 for proteasomal degradation. RCOR1 is likely to be the primary target while degradation of KDM1A and HDAC2 is likely due to their association with RCOR1. Also targets RCOR3, MIER2 and MIER3 for proteasomal degradation as well as associated proteins ZNF217 and RREB1. Degradation is dependent on the presence of an ELM2 domain in the target proteins. This Homo sapiens (Human) protein is Kelch repeat and BTB domain-containing protein 4 (KBTBD4).